The following is a 379-amino-acid chain: tRNA-specific 2-thiouridylase MnmA (379 aa).

Residues 9 to 16 and Met-35 each bind ATP; that span reads GLSGGVDS. The segment at 95–97 is interaction with target base in tRNA; the sequence is NPD. The active-site Nucleophile is the Cys-100. A disulfide bridge links Cys-100 with Cys-198. Gly-124 provides a ligand contact to ATP. Positions 148-150 are interaction with tRNA; sequence KDQ. The Cysteine persulfide intermediate role is filled by Cys-198. Positions 325-326 are interaction with tRNA; that stretch reads RY.

Belongs to the MnmA/TRMU family.

The protein resides in the cytoplasm. The catalysed reaction is S-sulfanyl-L-cysteinyl-[protein] + uridine(34) in tRNA + AH2 + ATP = 2-thiouridine(34) in tRNA + L-cysteinyl-[protein] + A + AMP + diphosphate + H(+). Catalyzes the 2-thiolation of uridine at the wobble position (U34) of tRNA, leading to the formation of s(2)U34. The polypeptide is tRNA-specific 2-thiouridylase MnmA (Acidovorax sp. (strain JS42)).